Reading from the N-terminus, the 332-residue chain is Ribosomal RNA small subunit methyltransferase H (332 aa).

S-adenosyl-L-methionine contacts are provided by residues 36–38 (GGY), Asp54, Phe81, Asp102, and Gln109. The interval 297 to 318 (ARSAKLRGAERTEAPAHAAGDL) is disordered.

This sequence belongs to the methyltransferase superfamily. RsmH family.

It is found in the cytoplasm. It carries out the reaction cytidine(1402) in 16S rRNA + S-adenosyl-L-methionine = N(4)-methylcytidine(1402) in 16S rRNA + S-adenosyl-L-homocysteine + H(+). Functionally, specifically methylates the N4 position of cytidine in position 1402 (C1402) of 16S rRNA. The polypeptide is Ribosomal RNA small subunit methyltransferase H (Rhodopseudomonas palustris (strain TIE-1)).